The sequence spans 388 residues: Alanine racemase (388 aa).

Residue Lys44 is the Proton acceptor; specific for D-alanine of the active site. N6-(pyridoxal phosphate)lysine is present on Lys44. Arg142 contributes to the substrate binding site. Catalysis depends on Tyr273, which acts as the Proton acceptor; specific for L-alanine. A substrate-binding site is contributed by Met321.

This sequence belongs to the alanine racemase family. It depends on pyridoxal 5'-phosphate as a cofactor.

The catalysed reaction is L-alanine = D-alanine. It participates in amino-acid biosynthesis; D-alanine biosynthesis; D-alanine from L-alanine: step 1/1. Its function is as follows. Catalyzes the interconversion of L-alanine and D-alanine. May also act on other amino acids. In Mycobacterium leprae (strain TN), this protein is Alanine racemase (alr).